Consider the following 192-residue polypeptide: Erythropoietin (192 aa).

Residues 1-26 (MGVPERPTLLLLLSLLLIPLGLPVLC) form the signal peptide. C33 and C187 are disulfide-bonded. N-linked (GlcNAc...) asparagine glycosylation is found at N50, N64, and N109.

Belongs to the EPO/TPO family. In terms of tissue distribution, produced by kidney or liver of adult mammals and by liver of fetal or neonatal mammals.

Its subcellular location is the secreted. Functionally, hormone involved in the regulation of erythrocyte proliferation and differentiation and the maintenance of a physiological level of circulating erythrocyte mass. Binds to EPOR leading to EPOR dimerization and JAK2 activation thereby activating specific downstream effectors, including STAT1 and STAT3. This chain is Erythropoietin (Epo), found in Mus musculus (Mouse).